Here is a 390-residue protein sequence, read N- to C-terminus: Chorismate synthase (390 aa).

Positions 39 and 45 each coordinate NADP(+). Residues 132 to 134 (RSS), 253 to 254 (NA), glycine 298, 313 to 317 (KPIPT), and arginine 339 each bind FMN.

It belongs to the chorismate synthase family. As to quaternary structure, homotetramer. The cofactor is FMNH2.

It carries out the reaction 5-O-(1-carboxyvinyl)-3-phosphoshikimate = chorismate + phosphate. It participates in metabolic intermediate biosynthesis; chorismate biosynthesis; chorismate from D-erythrose 4-phosphate and phosphoenolpyruvate: step 7/7. Catalyzes the anti-1,4-elimination of the C-3 phosphate and the C-6 proR hydrogen from 5-enolpyruvylshikimate-3-phosphate (EPSP) to yield chorismate, which is the branch point compound that serves as the starting substrate for the three terminal pathways of aromatic amino acid biosynthesis. This reaction introduces a second double bond into the aromatic ring system. The sequence is that of Chorismate synthase from Bacillus pumilus (strain SAFR-032).